Here is a 510-residue protein sequence, read N- to C-terminus: Cytochrome P450 monooxygenase ptmK (510 aa).

Residues 2 to 22 (IIVTFFWVGIVLSAIWTFYKV) traverse the membrane as a helical segment. 3 N-linked (GlcNAc...) asparagine glycosylation sites follow: Asn-313, Asn-408, and Asn-443. Cys-456 provides a ligand contact to heme.

Belongs to the cytochrome P450 family. Heme is required as a cofactor.

The protein resides in the membrane. Its pathway is secondary metabolite biosynthesis. Functionally, cytochrome P450 monooxygenase; part of the gene cluster that mediates the biosynthesis of the indole diterpenes penitrems. The geranylgeranyl diphosphate (GGPP) synthase ptmG catalyzes the first step in penitrem biosynthesis via conversion of farnesyl pyrophosphate and isopentyl pyrophosphate into geranylgeranyl pyrophosphate (GGPP). Condensation of indole-3-glycerol phosphate with GGPP by the prenyl transferase ptmC then forms 3-geranylgeranylindole (3-GGI). Epoxidation by the FAD-dependent monooxygenase ptmM leads to a epoxidized-GGI that is substrate of the terpene cyclase ptmB for cyclization to yield paspaline. Paspaline is subsequently converted to 13-desoxypaxilline by the cytochrome P450 monooxygenase ptmP, the latter being then converted to paxilline by the cytochrome P450 monooxygenase ptmQ. Paxilline is converted to beta-paxitriol via C-10 ketoreduction by the short-chain dehydrogenase ptmH which can be monoprenylated at the C-20 by the indole diterpene prenyltransferase ptmD. A two-step elimination (acetylation and elimination) process performed by the O-acetyltransferase ptmV and ptmI leads to the production of the prenylated form of penijanthine. The FAD-linked oxidoreductase ptmO then converts the prenylated form of penijanthine into PC-M5 which is in turn transformed into PC-M4 by the aromatic dimethylallyltransferase ptmE. Five sequential oxidative transformations performed by the cytochrome P450 monooxygenases ptmK, ptmU, ptmL, ptmN and ptmJ yield the various penitrem compounds. PtmK, ptmU and ptmM are involved in the formation of the key bicyclic ring of penitrem C via the formation of the intermediates secopenitrem D and penitrem D. PtmL catalyzes the epoxidation of penitrem D and C to yield penitrem B and F, respectively. PtmJ catalyzes the last benzylic hydroxylation to convert penitrem B to prenitrem E and penitrem F to penitrem A. This Penicillium ochrochloron protein is Cytochrome P450 monooxygenase ptmK.